The primary structure comprises 104 residues: Histone H4 (104 aa).

Residues 1–21 (MAGRGKVGKGYGKVGAKRHTK) are disordered.

It belongs to the histone H4 family. As to quaternary structure, the nucleosome is a histone octamer containing two molecules each of H2A, H2B, H3 and H4 assembled in one H3-H4 heterotetramer and two H2A-H2B heterodimers. The octamer wraps approximately 147 bp of DNA.

It localises to the nucleus. The protein localises to the chromosome. Core component of nucleosome. Nucleosomes wrap and compact DNA into chromatin, limiting DNA accessibility to the cellular machineries which require DNA as a template. Histones thereby play a central role in transcription regulation, DNA repair, DNA replication and chromosomal stability. DNA accessibility is regulated via a complex set of post-translational modifications of histones, also called histone code, and nucleosome remodeling. This Sterkiella nova (Ciliate) protein is Histone H4.